The primary structure comprises 348 residues: Dihydroorotase (348 aa).

Residues H17 and H19 each contribute to the Zn(2+) site. Substrate is bound by residues 19–21 and N45; that span reads HLR. Zn(2+)-binding residues include K103, H140, and H178. K103 bears the N6-carboxylysine mark. Position 140 (H140) interacts with substrate. Substrate is bound at residue L223. Position 251 (D251) interacts with Zn(2+). D251 is an active-site residue. 2 residues coordinate substrate: H255 and A267.

The protein belongs to the metallo-dependent hydrolases superfamily. DHOase family. Class II DHOase subfamily. In terms of assembly, homodimer. It depends on Zn(2+) as a cofactor.

The catalysed reaction is (S)-dihydroorotate + H2O = N-carbamoyl-L-aspartate + H(+). Its pathway is pyrimidine metabolism; UMP biosynthesis via de novo pathway; (S)-dihydroorotate from bicarbonate: step 3/3. Its function is as follows. Catalyzes the reversible cyclization of carbamoyl aspartate to dihydroorotate. In Serratia proteamaculans (strain 568), this protein is Dihydroorotase.